A 253-amino-acid chain; its full sequence is ATP synthase subunit a (253 aa).

6 consecutive transmembrane segments (helical) span residues 30-50 (FTNA…VLLA), 88-108 (FFPF…IGLV), 118-138 (IAVT…YGLI), 144-164 (FLGI…MIMI), 184-204 (MLAG…LLGA), and 211-231 (VAPL…LVAF).

Belongs to the ATPase A chain family. In terms of assembly, F-type ATPases have 2 components, CF(1) - the catalytic core - and CF(0) - the membrane proton channel. CF(1) has five subunits: alpha(3), beta(3), gamma(1), delta(1), epsilon(1). CF(0) has three main subunits: a(1), b(2) and c(9-12). The alpha and beta chains form an alternating ring which encloses part of the gamma chain. CF(1) is attached to CF(0) by a central stalk formed by the gamma and epsilon chains, while a peripheral stalk is formed by the delta and b chains.

Its subcellular location is the cell inner membrane. In terms of biological role, key component of the proton channel; it plays a direct role in the translocation of protons across the membrane. This Beijerinckia indica subsp. indica (strain ATCC 9039 / DSM 1715 / NCIMB 8712) protein is ATP synthase subunit a.